Reading from the N-terminus, the 220-residue chain is Large ribosomal subunit protein uL16 (220 aa).

The protein belongs to the universal ribosomal protein uL16 family. As to quaternary structure, component of the large ribosomal subunit. Mature ribosomes consist of a small (40S) and a large (60S) subunit. The 40S subunit contains about 32 different proteins and 1 molecule of RNA (18S). The 60S subunit contains 45 different proteins and 3 molecules of RNA (25S, 5.8S and 5S).

Its subcellular location is the cytoplasm. Component of the ribosome, a large ribonucleoprotein complex responsible for the synthesis of proteins in the cell. The small ribosomal subunit (SSU) binds messenger RNAs (mRNAs) and translates the encoded message by selecting cognate aminoacyl-transfer RNA (tRNA) molecules. The large subunit (LSU) contains the ribosomal catalytic site termed the peptidyl transferase center (PTC), which catalyzes the formation of peptide bonds, thereby polymerizing the amino acids delivered by tRNAs into a polypeptide chain. The nascent polypeptides leave the ribosome through a tunnel in the LSU and interact with protein factors that function in enzymatic processing, targeting, and the membrane insertion of nascent chains at the exit of the ribosomal tunnel. The sequence is that of Large ribosomal subunit protein uL16 from Candida albicans (strain SC5314 / ATCC MYA-2876) (Yeast).